Consider the following 324-residue polypeptide: tRNA U34 carboxymethyltransferase (324 aa).

Residues lysine 91, tryptophan 105, lysine 110, glycine 130, 152-154, 181-182, methionine 196, tyrosine 200, and arginine 315 each bind carboxy-S-adenosyl-L-methionine; these read DPS and IE.

The protein belongs to the class I-like SAM-binding methyltransferase superfamily. CmoB family. Homotetramer.

The enzyme catalyses carboxy-S-adenosyl-L-methionine + 5-hydroxyuridine(34) in tRNA = 5-carboxymethoxyuridine(34) in tRNA + S-adenosyl-L-homocysteine + H(+). Catalyzes carboxymethyl transfer from carboxy-S-adenosyl-L-methionine (Cx-SAM) to 5-hydroxyuridine (ho5U) to form 5-carboxymethoxyuridine (cmo5U) at position 34 in tRNAs. The polypeptide is tRNA U34 carboxymethyltransferase (Aliivibrio salmonicida (strain LFI1238) (Vibrio salmonicida (strain LFI1238))).